Here is a 548-residue protein sequence, read N- to C-terminus: Membrane protein insertase YidC (548 aa).

A helical transmembrane segment spans residues 6–26; sequence NLLVIALLFVSFMIWQAWEQD. A disordered region spans residues 28–56; the sequence is NPQPQTQQTTQTTTTAAGSAADQGVPASG. Over residues 29–42 the composition is skewed to low complexity; it reads PQPQTQQTTQTTTT. 4 helical membrane passes run 350 to 370, 424 to 444, 458 to 478, and 499 to 519; these read FVGN…GIMY, FPLI…MGSI, LSAQ…MFFI, and PVIF…YYIV.

Belongs to the OXA1/ALB3/YidC family. Type 1 subfamily. Interacts with the Sec translocase complex via SecD. Specifically interacts with transmembrane segments of nascent integral membrane proteins during membrane integration.

The protein localises to the cell inner membrane. Functionally, required for the insertion and/or proper folding and/or complex formation of integral membrane proteins into the membrane. Involved in integration of membrane proteins that insert both dependently and independently of the Sec translocase complex, as well as at least some lipoproteins. Aids folding of multispanning membrane proteins. The chain is Membrane protein insertase YidC from Salmonella dublin (strain CT_02021853).